The sequence spans 276 residues: Secretagogin (276 aa).

EF-hand domains follow at residues Leu-12–Lys-47, Asp-105–His-140, Glu-149–Phe-184, Glu-197–Leu-232, and Val-240–Pro-276. Residues Asp-118, Asp-120, Ser-122, Glu-129, Asp-162, Asn-164, Asp-166, Arg-168, Asp-173, Asp-210, Ser-212, Thr-214, Glu-221, Asp-254, Asn-256, Asp-258, Lys-260, and Glu-265 each coordinate Ca(2+).

In terms of tissue distribution, highly expressed in pancreas, in particular in pancreatic islets and pancreatic beta-cells. Detected in prostate, adrenal gland, small intestine, stomach and thyroid (at protein level).

The protein resides in the cytoplasm. It localises to the secreted. Its subcellular location is the cytoplasmic vesicle. It is found in the secretory vesicle membrane. This Rattus norvegicus (Rat) protein is Secretagogin (Scgn).